A 962-amino-acid polypeptide reads, in one-letter code: Translation initiation factor IF-2 (962 aa).

Positions 99–366 (VKAAQTQAAP…KKGKKLKLEP (268 aa)) are disordered. Positions 117–141 (DAAKARAEAAARAEARAKAEAEAAK) are enriched in basic and acidic residues. Residues 145–155 (AKAGNKAKPAA) show a composition bias toward low complexity. Residues 173–216 (KPAEESKAEKAQADKMPSEKPAEPKEKAAKPKHERNGKGKDAKK) are compositionally biased toward basic and acidic residues. Residues 219–234 (KPAAPAVPQPVVSAEE) show a composition bias toward low complexity. Basic and acidic residues predominate over residues 235-269 (QAQRDEEARRAAALRAHQEALLKEKQERQARREAM). Positions 270–283 (KQQAEQQAKAAQEA) are enriched in low complexity. Composition is skewed to basic and acidic residues over residues 314–327 (AKKE…DEGQ) and 338–354 (GGRD…ERVR). In terms of domain architecture, tr-type G spans 462–631 (PRPPVVTVMG…LLEAEVLELT (170 aa)). Positions 471–478 (GHVDHGKT) are G1. 471–478 (GHVDHGKT) contributes to the GTP binding site. The interval 496–500 (GITQH) is G2. Residues 517-520 (DTPG) form a G3 region. GTP is bound by residues 517-521 (DTPGH) and 571-574 (NKID). The G4 stretch occupies residues 571-574 (NKID). Residues 607–609 (SAK) form a G5 region.

Belongs to the TRAFAC class translation factor GTPase superfamily. Classic translation factor GTPase family. IF-2 subfamily.

It localises to the cytoplasm. In terms of biological role, one of the essential components for the initiation of protein synthesis. Protects formylmethionyl-tRNA from spontaneous hydrolysis and promotes its binding to the 30S ribosomal subunits. Also involved in the hydrolysis of GTP during the formation of the 70S ribosomal complex. The sequence is that of Translation initiation factor IF-2 from Neisseria meningitidis serogroup B (strain ATCC BAA-335 / MC58).